Consider the following 911-residue polypeptide: Leucine--tRNA ligase (911 aa).

Residues proline 42–histidine 52 carry the 'HIGH' region motif. Positions threonine 659–serine 663 match the 'KMSKS' region motif. Lysine 662 contributes to the ATP binding site.

It belongs to the class-I aminoacyl-tRNA synthetase family.

The protein localises to the cytoplasm. It catalyses the reaction tRNA(Leu) + L-leucine + ATP = L-leucyl-tRNA(Leu) + AMP + diphosphate. The chain is Leucine--tRNA ligase from Delftia acidovorans (strain DSM 14801 / SPH-1).